A 331-amino-acid polypeptide reads, in one-letter code: PTS-dependent dihydroxyacetone kinase 2, dihydroxyacetone-binding subunit DhaK (331 aa).

In terms of domain architecture, DhaK spans 7 to 328 (DGYEAVEEML…LDTPCDTPYF (322 aa)). Dihydroxyacetone contacts are provided by residues 55 to 58 (GSGH) and Asp-111. Residue His-58 is the Proton acceptor of the active site. His-218 (tele-hemiaminal-histidine intermediate) is an active-site residue.

As to quaternary structure, homodimer. The dihydroxyacetone kinase complex is composed of a homodimer of DhaM, a homodimer of DhaK and the subunit DhaL.

The protein localises to the cytoplasm. The enzyme catalyses dihydroxyacetone + phosphoenolpyruvate = dihydroxyacetone phosphate + pyruvate. The protein operates within polyol metabolism; glycerol degradation. In terms of biological role, dihydroxyacetone binding subunit of the dihydroxyacetone kinase, which is responsible for the phosphoenolpyruvate (PEP)-dependent phosphorylation of dihydroxyacetone via a phosphoryl group transfer from DhaL-ATP. This chain is PTS-dependent dihydroxyacetone kinase 2, dihydroxyacetone-binding subunit DhaK, found in Listeria innocua serovar 6a (strain ATCC BAA-680 / CLIP 11262).